Here is a 370-residue protein sequence, read N- to C-terminus: tRNA-specific 2-thiouridylase MnmA (370 aa).

ATP is bound by residues 11-18 and M37; that span reads AMSGGVDS. Residues 99–101 are interaction with target base in tRNA; sequence NPD. The active-site Nucleophile is the C104. A disulfide bond links C104 and C201. Residue G129 participates in ATP binding. Residues 151 to 153 are interaction with tRNA; sequence KDQ. C201 (cysteine persulfide intermediate) is an active-site residue. The segment at 313–314 is interaction with tRNA; it reads RY.

This sequence belongs to the MnmA/TRMU family. As to quaternary structure, interacts with TusE.

Its subcellular location is the cytoplasm. It catalyses the reaction S-sulfanyl-L-cysteinyl-[protein] + uridine(34) in tRNA + AH2 + ATP = 2-thiouridine(34) in tRNA + L-cysteinyl-[protein] + A + AMP + diphosphate + H(+). Functionally, catalyzes the 2-thiolation of uridine at the wobble position (U34) of tRNA(Lys), tRNA(Glu) and tRNA(Gln), leading to the formation of s(2)U34, the first step of tRNA-mnm(5)s(2)U34 synthesis. Sulfur is provided by IscS, via a sulfur-relay system. Binds ATP and its substrate tRNAs. This chain is tRNA-specific 2-thiouridylase MnmA, found in Buchnera aphidicola subsp. Baizongia pistaciae (strain Bp).